The following is a 1234-amino-acid chain: PAN2-PAN3 deadenylation complex catalytic subunit PAN2 (1234 aa).

Residues 12 to 32 (LKNSNNNSNSNSSSNNSSNGV) are disordered. Low complexity predominate over residues 14–30 (NSNNNSNSNSSSNNSSN). WD repeat units follow at residues 176–213 (NHTGKVAMVKEAPKLLALASSTGSLELFDPTSNSSIKT), 272–315 (AFPA…VYHA), and 342–381 (QQQPHLSGLEISENGDFFMFNDGFSNLHLWSITNSGTLSK). The interval 323–346 (PLPPAGSSAAQQQKQQQQQQQQPH) is disordered. Low complexity predominate over residues 333–344 (QQQKQQQQQQQQ). Residues 383–537 (FVNFPQEIER…DSIFQCQNDE (155 aa)) form a linker region. One can recognise a USP domain in the interval 538–946 (KIPNCYSRLQ…KPVIVIYQEV (409 aa)). Positions 751–775 (PNTQQDQQQQQQQQQQQQQQQQPTN) are disordered. Positions 754–772 (QQDQQQQQQQQQQQQQQQQ) are enriched in low complexity. A divalent metal cation-binding residues include D1004, E1006, D1138, and D1191. Residues 1072 to 1199 (GEAFIDDYIV…EDARTALLLY (128 aa)) form the Exonuclease domain.

The protein belongs to the peptidase C19 family. PAN2 subfamily. Forms a heterotrimer with an asymmetric homodimer of the regulatory subunit PAN3 to form the poly(A)-nuclease (PAN) deadenylation complex. It depends on a divalent metal cation as a cofactor.

Its subcellular location is the cytoplasm. It carries out the reaction Exonucleolytic cleavage of poly(A) to 5'-AMP.. Its activity is regulated as follows. Positively regulated by the regulatory subunit PAN3. Catalytic subunit of the poly(A)-nuclease (PAN) deadenylation complex, one of two cytoplasmic mRNA deadenylases involved in mRNA turnover. PAN specifically shortens poly(A) tails of RNA and the activity is stimulated by poly(A)-binding protein PAB1. PAN deadenylation is followed by rapid degradation of the shortened mRNA tails by the CCR4-NOT complex. Deadenylated mRNAs are then degraded by two alternative mechanisms, namely exosome-mediated 3'-5' exonucleolytic degradation, or deadenylation-dependent mRNA decaping and subsequent 5'-3' exonucleolytic degradation by XRN1. May also be involved in post-transcriptional maturation of mRNA poly(A) tails. The protein is PAN2-PAN3 deadenylation complex catalytic subunit PAN2 of Lodderomyces elongisporus (strain ATCC 11503 / CBS 2605 / JCM 1781 / NBRC 1676 / NRRL YB-4239) (Yeast).